A 112-amino-acid chain; its full sequence is Putative transmembrane protein ORF112 (112 aa).

The next 3 helical transmembrane spans lie at 26 to 46 (FWEV…GILV), 50 to 70 (ILVT…MYLF), and 80 to 100 (IFFP…LVGV).

Its subcellular location is the host membrane. This chain is Putative transmembrane protein ORF112, found in Acidianus convivator (ABV).